Consider the following 292-residue polypeptide: MASLKDMRVRIASTKATQKITKAMQMVAASKLRRAQLAAEAARPYAERMDAVISNIASAAAGSPGAPVLLAGTGKDQVHLLLVCTGERGLSGAFNSSIVRLARERALSLMNQGKEVKLFCVGRKGYEQLRRTFDRQIVENIELRSVRQLGFVNAEDIAHKVVARFNNGEFDVCTLFYSRFKSVISQIPTAQQIIPLVVEAPAANAGPATSYEYEPEEDEILAGLLPRNLAVQIFRALLENNASFYGAQMSAMDNATRNAGDMIRKQTLIYNRTRQAMITKELIEIISGAEAI.

It belongs to the ATPase gamma chain family. In terms of assembly, F-type ATPases have 2 components, CF(1) - the catalytic core - and CF(0) - the membrane proton channel. CF(1) has five subunits: alpha(3), beta(3), gamma(1), delta(1), epsilon(1). CF(0) has three main subunits: a, b and c.

The protein localises to the cell inner membrane. Its function is as follows. Produces ATP from ADP in the presence of a proton gradient across the membrane. The gamma chain is believed to be important in regulating ATPase activity and the flow of protons through the CF(0) complex. The polypeptide is ATP synthase gamma chain (Rhodopseudomonas palustris (strain BisB18)).